The following is a 375-amino-acid chain: Type II restriction enzyme ApaLI (375 aa).

The catalysed reaction is Endonucleolytic cleavage of DNA to give specific double-stranded fragments with terminal 5'-phosphates.. A subtype P restriction enzyme that recognizes the double-stranded sequence 5'-GTGCAC-3' and cleaves after G-1. This chain is Type II restriction enzyme ApaLI, found in Acetobacter pasteurianus (Acetobacter turbidans).